The chain runs to 305 residues: Superkiller complex protein 8 (305 aa).

WD repeat units follow at residues 14 to 57 (AHED…LELQ), 62 to 101 (GHQLGVVSVDVSPSGNIMASSSLDAHIRLWDLESGKQIRA), 104 to 143 (AGPVDAWSVAFSPDSQHLATGSHVGKVNIFGVETGKKEYS), 146 to 187 (TRGK…HTLE), 188 to 227 (GHAMPIRSLTFSPDSQLLVTASDDGYIKIYEVQHASLAAT), 230 to 269 (GHGSWVLNVAFSPDDTHFVSSSSDKSVKVWDVSARTCVHT), and 272 to 305 (DHQDQVWGVKYNKNGSKIVSVADDQEIHVYDCPI).

Belongs to the SKI8 family. Component of the PAF1 complex. Component of the SKI complex.

Its subcellular location is the nucleus. The protein resides in the cytoplasm. In terms of biological role, component of the PAF1 complex (PAF1C) which has multiple functions during transcription by RNA polymerase II and is implicated in regulation of development and maintenance of embryonic stem cell pluripotency. PAF1C associates with RNA polymerase II through interaction with POLR2A CTD non-phosphorylated and 'Ser-2'- and 'Ser-5'-phosphorylated forms and is involved in transcriptional elongation, acting both independently and synergistically with TCEA1 and in cooperation with the DSIF complex and HTATSF1. Also acts as a component of the SKI complex, a multiprotein complex that assists the RNA-degrading exosome during the mRNA decay and quality-control pathways. The SKI complex catalyzes mRNA extraction from 80S ribosomal complexes in the 3'-5' direction and channels mRNA to the cytosolic exosome for degradation. This Xenopus tropicalis (Western clawed frog) protein is Superkiller complex protein 8 (skic8).